The following is a 68-amino-acid chain: U19-ctenitoxin-Pn1a (68 aa).

At glutamine 1 the chain carries Pyrrolidone carboxylic acid. Intrachain disulfides connect cysteine 8-cysteine 19, cysteine 13-cysteine 28, cysteine 18-cysteine 51, cysteine 38-cysteine 59, and cysteine 53-cysteine 65.

Expressed by the venom gland.

The protein resides in the secreted. Functionally, non-toxic to mice and insects. This Phoneutria nigriventer (Brazilian armed spider) protein is U19-ctenitoxin-Pn1a.